The chain runs to 135 residues: S-protein homolog 29 (135 aa).

Positions 1–24 are cleaved as a signal peptide; it reads MKNSSKIFVVLSIILFYVISSCHG. N-linked (GlcNAc...) asparagine glycosylation occurs at asparagine 110.

The protein belongs to the plant self-incompatibility (S1) protein family.

It localises to the secreted. The protein is S-protein homolog 29 of Arabidopsis thaliana (Mouse-ear cress).